Reading from the N-terminus, the 537-residue chain is CTP synthase (537 aa).

The amidoligase domain stretch occupies residues 1 to 269 (MNQTKYIFVT…DKVALKKLDL (269 aa)). Serine 15 is a CTP binding site. A UTP-binding site is contributed by serine 15. 16-21 (SLGKGI) serves as a coordination point for ATP. Residue tyrosine 56 participates in L-glutamine binding. Aspartate 73 contributes to the ATP binding site. Mg(2+)-binding residues include aspartate 73 and glutamate 143. Residues 150–152 (DIE), 190–195 (KTKPTQ), and lysine 226 each bind CTP. Residues 190 to 195 (KTKPTQ) and lysine 226 each bind UTP. The 243-residue stretch at 295–537 (SIGLVGKYVE…IAAAVKHKNK (243 aa)) folds into the Glutamine amidotransferase type-1 domain. Glycine 357 lines the L-glutamine pocket. Cysteine 384 acts as the Nucleophile; for glutamine hydrolysis in catalysis. L-glutamine is bound by residues 385-388 (LGMQ), glutamate 408, and arginine 465. Residues histidine 510 and glutamate 512 contribute to the active site.

It belongs to the CTP synthase family. Homotetramer.

It catalyses the reaction UTP + L-glutamine + ATP + H2O = CTP + L-glutamate + ADP + phosphate + 2 H(+). It carries out the reaction L-glutamine + H2O = L-glutamate + NH4(+). The enzyme catalyses UTP + NH4(+) + ATP = CTP + ADP + phosphate + 2 H(+). The protein operates within pyrimidine metabolism; CTP biosynthesis via de novo pathway; CTP from UDP: step 2/2. Its activity is regulated as follows. Allosterically activated by GTP, when glutamine is the substrate; GTP has no effect on the reaction when ammonia is the substrate. The allosteric effector GTP functions by stabilizing the protein conformation that binds the tetrahedral intermediate(s) formed during glutamine hydrolysis. Inhibited by the product CTP, via allosteric rather than competitive inhibition. Catalyzes the ATP-dependent amination of UTP to CTP with either L-glutamine or ammonia as the source of nitrogen. Regulates intracellular CTP levels through interactions with the four ribonucleotide triphosphates. The chain is CTP synthase from Flavobacterium psychrophilum (strain ATCC 49511 / DSM 21280 / CIP 103535 / JIP02/86).